Consider the following 335-residue polypeptide: Trans-3-hydroxy-L-proline dehydratase (335 aa).

Cysteine 91 functions as the Proton acceptor in the catalytic mechanism. Substrate-binding positions include 92-93 (GH) and 256-257 (GS).

This sequence belongs to the proline racemase family. In terms of assembly, homodimer.

The catalysed reaction is trans-3-hydroxy-L-proline = 1-pyrroline-2-carboxylate + H2O. It functions in the pathway amino-acid degradation. Catalyzes the dehydration of trans-3-hydroxy-L-proline (t3LHyp) to Delta(1)-pyrroline-2-carboxylate (Pyr2C). Together with LhpI, is involved in a t3LHyp degradation pathway to L-proline, which allows A.brasilense to grow on t3LHyp as a sole carbon source. In Azospirillum brasilense, this protein is Trans-3-hydroxy-L-proline dehydratase.